A 111-amino-acid chain; its full sequence is Large ribosomal subunit protein uL24 (111 aa).

The segment at 43–62 is disordered; the sequence is TRHKKKDQTTKRAAKQSTGK.

It belongs to the universal ribosomal protein uL24 family. In terms of assembly, part of the 50S ribosomal subunit.

Its function is as follows. One of two assembly initiator proteins, it binds directly to the 5'-end of the 23S rRNA, where it nucleates assembly of the 50S subunit. In terms of biological role, one of the proteins that surrounds the polypeptide exit tunnel on the outside of the subunit. This is Large ribosomal subunit protein uL24 from Mycoplasma pneumoniae (strain ATCC 29342 / M129 / Subtype 1) (Mycoplasmoides pneumoniae).